We begin with the raw amino-acid sequence, 201 residues long: Histidinol dehydrogenase (201 aa).

It belongs to the histidinol dehydrogenase family. As to quaternary structure, homodimer. Requires Zn(2+) as cofactor.

It catalyses the reaction L-histidinol + 2 NAD(+) + H2O = L-histidine + 2 NADH + 3 H(+). Its pathway is amino-acid biosynthesis; L-histidine biosynthesis; L-histidine from 5-phospho-alpha-D-ribose 1-diphosphate: step 9/9. Functionally, catalyzes the sequential NAD-dependent oxidations of L-histidinol to L-histidinaldehyde and then to L-histidine. The chain is Histidinol dehydrogenase (hisD) from Buchnera aphidicola subsp. Schlechtendalia chinensis.